The following is a 120-amino-acid chain: uncharacterized protein (120 aa).

The protein belongs to the HesB/IscA family.

This is an uncharacterized protein from Bacillus subtilis (strain 168).